The sequence spans 286 residues: Bifunctional protein FolD (286 aa).

NADP(+) contacts are provided by residues 167–169 and isoleucine 233; that span reads GRS.

It belongs to the tetrahydrofolate dehydrogenase/cyclohydrolase family. As to quaternary structure, homodimer.

It carries out the reaction (6R)-5,10-methylene-5,6,7,8-tetrahydrofolate + NADP(+) = (6R)-5,10-methenyltetrahydrofolate + NADPH. The enzyme catalyses (6R)-5,10-methenyltetrahydrofolate + H2O = (6R)-10-formyltetrahydrofolate + H(+). It functions in the pathway one-carbon metabolism; tetrahydrofolate interconversion. In terms of biological role, catalyzes the oxidation of 5,10-methylenetetrahydrofolate to 5,10-methenyltetrahydrofolate and then the hydrolysis of 5,10-methenyltetrahydrofolate to 10-formyltetrahydrofolate. In Limosilactobacillus reuteri (strain DSM 20016) (Lactobacillus reuteri), this protein is Bifunctional protein FolD.